The sequence spans 320 residues: Phosphate acetyltransferase (320 aa).

The protein belongs to the phosphate acetyltransferase and butyryltransferase family.

The protein resides in the cytoplasm. It carries out the reaction acetyl-CoA + phosphate = acetyl phosphate + CoA. The protein operates within metabolic intermediate biosynthesis; acetyl-CoA biosynthesis; acetyl-CoA from acetate: step 2/2. In Mycoplasma genitalium (strain ATCC 33530 / DSM 19775 / NCTC 10195 / G37) (Mycoplasmoides genitalium), this protein is Phosphate acetyltransferase (pta).